The chain runs to 270 residues: Thiamine thiazole synthase (270 aa).

NAD(+) contacts are provided by residues alanine 39, 58 to 59, glycine 66, and leucine 130; that span reads EQ. Cysteine 159 is subject to 2,3-didehydroalanine (Cys). Aspartate 161 lines the NAD(+) pocket. Fe cation is bound by residues aspartate 161 and histidine 176. Isoleucine 223 lines the NAD(+) pocket. Arginine 233 provides a ligand contact to glycine.

Belongs to the THI4 family. As to quaternary structure, homooctamer; tetramer of dimers. The cofactor is Fe(2+). During the catalytic reaction, a sulfide is transferred from Cys-159 to a reaction intermediate, generating a dehydroalanine residue.

The catalysed reaction is [ADP-thiazole synthase]-L-cysteine + glycine + NAD(+) = [ADP-thiazole synthase]-dehydroalanine + ADP-5-ethyl-4-methylthiazole-2-carboxylate + nicotinamide + 3 H2O + 2 H(+). Its pathway is cofactor biosynthesis; thiamine diphosphate biosynthesis. Functionally, involved in biosynthesis of the thiamine precursor thiazole. Catalyzes the conversion of NAD and glycine to adenosine diphosphate 5-(2-hydroxyethyl)-4-methylthiazole-2-carboxylic acid (ADT), an adenylated thiazole intermediate. The reaction includes an iron-dependent sulfide transfer from a conserved cysteine residue of the protein to a thiazole intermediate. The enzyme can only undergo a single turnover, which suggests it is a suicide enzyme. This Aeropyrum pernix (strain ATCC 700893 / DSM 11879 / JCM 9820 / NBRC 100138 / K1) protein is Thiamine thiazole synthase.